A 521-amino-acid chain; its full sequence is Cytochrome P450 1A1 (521 aa).

Substrate is bound at residue Phe229. A heme-binding site is contributed by Cys463.

It belongs to the cytochrome P450 family. The cofactor is heme.

Its subcellular location is the endoplasmic reticulum membrane. The protein localises to the microsome membrane. It carries out the reaction an organic molecule + reduced [NADPH--hemoprotein reductase] + O2 = an alcohol + oxidized [NADPH--hemoprotein reductase] + H2O + H(+). Functionally, cytochromes P450 are a group of heme-thiolate monooxygenases. They oxidize a variety of structurally unrelated compounds, including steroids, fatty acids, and xenobiotics. The chain is Cytochrome P450 1A1 (cyp1a1) from Chelon auratus (Golden grey mullet).